The chain runs to 176 residues: Large ribosomal subunit protein bL17m (176 aa).

Residues 1–8 (MRLSLAAA) constitute a mitochondrion transit peptide.

It belongs to the bacterial ribosomal protein bL17 family. As to quaternary structure, component of the mitochondrial ribosome large subunit (39S) which comprises a 16S rRNA and about 50 distinct proteins.

It is found in the mitochondrion. The chain is Large ribosomal subunit protein bL17m (Mrpl17) from Rattus norvegicus (Rat).